A 259-amino-acid chain; its full sequence is Ribonuclease HII (259 aa).

The RNase H type-2 domain occupies 70–258 (TLIAGIDEVG…VKSLVLGKKE (189 aa)). Asp-76, Glu-77, and Asp-168 together coordinate a divalent metal cation.

Belongs to the RNase HII family. The cofactor is Mn(2+). Requires Mg(2+) as cofactor.

The protein resides in the cytoplasm. It carries out the reaction Endonucleolytic cleavage to 5'-phosphomonoester.. Its function is as follows. Endonuclease that specifically degrades the RNA of RNA-DNA hybrids. The chain is Ribonuclease HII from Streptococcus pneumoniae (strain Hungary19A-6).